Here is a 268-residue protein sequence, read N- to C-terminus: MTGLAIRNISMRFDLPNGGSVQALQDVSLDIKQGEIMSVLGPSGCGKTTLLNIVAGFLAPTDGVIELNGHEVHGPNAERGMVFQKGALFEWMSVRENVSFGPRMKGERASDYSANVDHLLDVVGLQDFKEKAIYELSGGMQQRVALARCLANDPDVILMDEPLGALDALTREKMQSLVLKLWKETGKTIILITHSVEEALLLGERLIVMAPRPGRIHKEYRLPFADEGVDADLREVKKNPKFAEVREEILGMIWDMEEEIMGRTEASA.

The ABC transporter domain occupies 4 to 236; the sequence is LAIRNISMRF…EGVDADLREV (233 aa). An ATP-binding site is contributed by 41–48; that stretch reads GPSGCGKT.

The protein belongs to the ABC transporter superfamily. Taurine importer (TC 3.A.1.17.1) family. The complex is composed of two ATP-binding proteins (TauB), two transmembrane proteins (TauC) and a solute-binding protein (TauA).

It localises to the cell inner membrane. The catalysed reaction is taurine(out) + ATP + H2O = taurine(in) + ADP + phosphate + H(+). Its function is as follows. Part of the ABC transporter complex TauABC involved in taurine import. Responsible for energy coupling to the transport system. The sequence is that of Taurine import ATP-binding protein TauB from Jannaschia sp. (strain CCS1).